An 864-amino-acid polypeptide reads, in one-letter code: Leucine--tRNA ligase (864 aa).

Positions 42–52 (PYPSGKLHMGH) match the 'HIGH' region motif. The short motif at 624–628 (KMSKS) is the 'KMSKS' region element. Lys627 serves as a coordination point for ATP.

Belongs to the class-I aminoacyl-tRNA synthetase family.

The protein localises to the cytoplasm. It carries out the reaction tRNA(Leu) + L-leucine + ATP = L-leucyl-tRNA(Leu) + AMP + diphosphate. This chain is Leucine--tRNA ligase, found in Burkholderia vietnamiensis (strain G4 / LMG 22486) (Burkholderia cepacia (strain R1808)).